A 235-amino-acid polypeptide reads, in one-letter code: Carboxymethylenebutenolidase 2 (235 aa).

Catalysis depends on residues Cys117, Asp173, and His204.

The protein belongs to the dienelactone hydrolase family. As to quaternary structure, monomer.

It carries out the reaction 2-(5-oxo-2,5-dihydrofuran-2-ylidene)acetate + H2O = 4-oxohex-2-enedioate + H(+). It functions in the pathway aromatic compound metabolism; 3-chlorocatechol degradation. Ring cleavage of cyclic ester dienelactone to produce maleylacetate. The sequence is that of Carboxymethylenebutenolidase 2 (tfdEII) from Cupriavidus pinatubonensis (strain JMP 134 / LMG 1197) (Cupriavidus necator (strain JMP 134)).